A 159-amino-acid chain; its full sequence is Glucosamine 6-phosphate N-acetyltransferase (159 aa).

An N-acetylserine modification is found at serine 2. D-glucosamine 6-phosphate contacts are provided by residues threonine 28, 86–89 (KIIH), and 98–100 (EDI). In terms of domain architecture, N-acetyltransferase spans 28–159 (TTVGTITPES…NAGVEMQIRK (132 aa)). Acetyl-CoA-binding positions include 100 to 102 (IAV) and 108 to 113 (GQGLGK). Residues 129–130 (YK) and aspartate 134 contribute to the D-glucosamine 6-phosphate site. Residue 143–145 (YEK) participates in acetyl-CoA binding. Arginine 158 contacts D-glucosamine 6-phosphate.

Belongs to the acetyltransferase family. GNA1 subfamily. Homodimer.

The catalysed reaction is D-glucosamine 6-phosphate + acetyl-CoA = N-acetyl-D-glucosamine 6-phosphate + CoA + H(+). The protein operates within nucleotide-sugar biosynthesis; UDP-N-acetyl-alpha-D-glucosamine biosynthesis; N-acetyl-alpha-D-glucosamine 1-phosphate from alpha-D-glucosamine 6-phosphate (route I): step 1/2. The sequence is that of Glucosamine 6-phosphate N-acetyltransferase (GNA1) from Saccharomyces cerevisiae (strain ATCC 204508 / S288c) (Baker's yeast).